A 258-amino-acid chain; its full sequence is SLA class II histocompatibility antigen, DQ haplotype D beta chain (258 aa).

Residues 1–31 (MVALRLPRGLWTAALTVMLVVLGAPVAEGRD) form the signal peptide. Residues 32–123 (SPQDFVVQFK…IEEGTTLQRR (92 aa)) are beta-1. Over 32-227 (SPQDFVVQFK…RAQSESAQSK (196 aa)) the chain is Extracellular. 2 disulfides stabilise this stretch: Cys44–Cys108 and Cys146–Cys202. Asn48 carries an N-linked (GlcNAc...) asparagine glycan. The interval 124–217 (VQPTVTISPS…SLQSPILVEW (94 aa)) is beta-2. An Ig-like C1-type domain is found at 126-230 (PTVTISPSKA…SESAQSKMLS (105 aa)). The tract at residues 218–227 (RAQSESAQSK) is connecting peptide. Residues 228 to 248 (MLSGVGGFVLGLIFLGLGLFI) traverse the membrane as a helical segment. The Cytoplasmic segment spans residues 249 to 258 (RHRSQKGLVR).

Belongs to the MHC class II family.

The protein localises to the membrane. This Sus scrofa (Pig) protein is SLA class II histocompatibility antigen, DQ haplotype D beta chain.